Here is a 113-residue protein sequence, read N- to C-terminus: Large ribosomal subunit protein uL24 (113 aa).

The protein belongs to the universal ribosomal protein uL24 family. As to quaternary structure, part of the 50S ribosomal subunit.

Functionally, one of two assembly initiator proteins, it binds directly to the 5'-end of the 23S rRNA, where it nucleates assembly of the 50S subunit. One of the proteins that surrounds the polypeptide exit tunnel on the outside of the subunit. The sequence is that of Large ribosomal subunit protein uL24 from Synechococcus sp. (strain RCC307).